Here is a 198-residue protein sequence, read N- to C-terminus: Recombination protein RecR (198 aa).

The segment at 57–72 (CSVCCNLTDQDPCQIC) adopts a C4-type zinc-finger fold. Residues 80 to 175 (STICVVQEPR…KVTRIARGLP (96 aa)) form the Toprim domain.

This sequence belongs to the RecR family.

Its function is as follows. May play a role in DNA repair. It seems to be involved in an RecBC-independent recombinational process of DNA repair. It may act with RecF and RecO. The polypeptide is Recombination protein RecR (Symbiobacterium thermophilum (strain DSM 24528 / JCM 14929 / IAM 14863 / T)).